A 121-amino-acid chain; its full sequence is Heimdall profilin (121 aa).

The protein belongs to the Asgard profilin family.

It is found in the cytoplasm. It localises to the cytoskeleton. Binds to actin and affects the structure of the cytoskeleton. At high concentrations inhibits spontaneous rabbit actin nucleation. This strongly suggests this archaea has a profilin-regulated actin system, and actin-type genes can be identified in this organism. This Heimdallarchaeota archaeon (strain LC_2) protein is Heimdall profilin.